A 157-amino-acid chain; its full sequence is Protein Smg homolog (157 aa).

It belongs to the Smg family.

The protein is Protein Smg homolog of Tolumonas auensis (strain DSM 9187 / NBRC 110442 / TA 4).